Here is a 383-residue protein sequence, read N- to C-terminus: Galactokinase (383 aa).

Position 34 to 37 (34 to 37 (EHTD)) interacts with substrate. 124–130 (GAGLSSS) lines the ATP pocket. Residues S130 and E162 each coordinate Mg(2+). D174 acts as the Proton acceptor in catalysis. Y223 lines the substrate pocket.

Belongs to the GHMP kinase family. GalK subfamily.

The protein resides in the cytoplasm. It carries out the reaction alpha-D-galactose + ATP = alpha-D-galactose 1-phosphate + ADP + H(+). The protein operates within carbohydrate metabolism; galactose metabolism. Functionally, catalyzes the transfer of the gamma-phosphate of ATP to D-galactose to form alpha-D-galactose-1-phosphate (Gal-1-P). This Serratia proteamaculans (strain 568) protein is Galactokinase.